Here is a 153-residue protein sequence, read N- to C-terminus: 3-hydroxyacyl-[acyl-carrier-protein] dehydratase FabZ (153 aa).

His57 is an active-site residue.

It belongs to the thioester dehydratase family. FabZ subfamily.

It localises to the cytoplasm. The catalysed reaction is a (3R)-hydroxyacyl-[ACP] = a (2E)-enoyl-[ACP] + H2O. In terms of biological role, involved in unsaturated fatty acids biosynthesis. Catalyzes the dehydration of short chain beta-hydroxyacyl-ACPs and long chain saturated and unsaturated beta-hydroxyacyl-ACPs. In Aeromonas salmonicida (strain A449), this protein is 3-hydroxyacyl-[acyl-carrier-protein] dehydratase FabZ.